Consider the following 209-residue polypeptide: Kynurenine formamidase (209 aa).

Trp-18 lines the substrate pocket. Zn(2+)-binding residues include His-48, His-52, and Asp-54. The Proton donor/acceptor role is filled by His-58. Positions 160 and 172 each coordinate Zn(2+).

This sequence belongs to the Cyclase 1 superfamily. KynB family. In terms of assembly, homodimer. Zn(2+) serves as cofactor.

The catalysed reaction is N-formyl-L-kynurenine + H2O = L-kynurenine + formate + H(+). The protein operates within amino-acid degradation; L-tryptophan degradation via kynurenine pathway; L-kynurenine from L-tryptophan: step 2/2. Functionally, catalyzes the hydrolysis of N-formyl-L-kynurenine to L-kynurenine, the second step in the kynurenine pathway of tryptophan degradation. In Maricaulis maris (strain MCS10) (Caulobacter maris), this protein is Kynurenine formamidase.